We begin with the raw amino-acid sequence, 245 residues long: MDGIRTSLDIEEYSDTEVQKNQVLTLEEWQDKWVNGNTAFHQEQGHRLLKKHLDTFLKGESGLRVFFPLCGKAVEMKWFADRGHSVVGVEISELGIREFFTEQNLSYSEEPVTEIPGTKIFKSSSGNISLYCCSIFDLPRTNIGKFDMIWDRGALVAINPGDRKCYADTMLSLLGKKFQYLLCVLSYDPTKHPGPPFYVPHAEIERLFGKICNIHCLEKVDAFEERHKSWGIDYLFEKLYLLTEK.

Ser14 bears the Phosphoserine mark. 29–40 (WQDKWVNGNTAF) is an S-adenosyl-L-methionine binding site. Substrate is bound at residue Phe40. N6-acetyllysine is present on Lys58. Residues Leu69, Glu90, 134-135 (SI), and Arg152 contribute to the S-adenosyl-L-methionine site.

Belongs to the class I-like SAM-binding methyltransferase superfamily. TPMT family. Monomer.

The protein resides in the cytoplasm. The catalysed reaction is S-adenosyl-L-methionine + a thiopurine = S-adenosyl-L-homocysteine + a thiopurine S-methylether.. This Pongo pygmaeus (Bornean orangutan) protein is Thiopurine S-methyltransferase (TPMT).